A 420-amino-acid polypeptide reads, in one-letter code: Histidine--tRNA ligase (420 aa).

The protein belongs to the class-II aminoacyl-tRNA synthetase family. In terms of assembly, homodimer.

The protein localises to the cytoplasm. It carries out the reaction tRNA(His) + L-histidine + ATP = L-histidyl-tRNA(His) + AMP + diphosphate + H(+). The polypeptide is Histidine--tRNA ligase (Staphylococcus aureus (strain Mu3 / ATCC 700698)).